The chain runs to 287 residues: ATP synthase gamma chain (287 aa).

Belongs to the ATPase gamma chain family. As to quaternary structure, F-type ATPases have 2 components, CF(1) - the catalytic core - and CF(0) - the membrane proton channel. CF(1) has five subunits: alpha(3), beta(3), gamma(1), delta(1), epsilon(1). CF(0) has three main subunits: a, b and c.

The protein localises to the cell inner membrane. Its function is as follows. Produces ATP from ADP in the presence of a proton gradient across the membrane. The gamma chain is believed to be important in regulating ATPase activity and the flow of protons through the CF(0) complex. The polypeptide is ATP synthase gamma chain (Xylella fastidiosa (strain M12)).